Consider the following 281-residue polypeptide: N-acetyltransferase ECO1 (281 aa).

A CCHH-type zinc finger spans residues 33–57 (VKCDKCEMSYSSTSIEDRAIHEKYH). Residues 86 to 105 (LSRSTGTITPLNSSPLKKSS) form a disordered region. The span at 95–105 (PLNSSPLKKSS) shows a compositional bias: low complexity. N6-acetyllysine; by autocatalysis is present on Lys223.

The protein belongs to the acetyltransferase family. ECO subfamily. Binds specifically to CHL12, RFC1, RFC2, RFC3, RFC4, RFC5 and RAD24 when members of an RFC complex. Interacts with CHL1 and MPS3. Autoacetylates in vitro.

The protein resides in the nucleus. In terms of biological role, required for establishment of sister chromatid cohesion during S phase but not for its further maintenance during G2 or M phases or for loading the cohesin complex onto DNA. Interacts with the three known alternate replication factor C (RFC) complexes, suggesting that these complexes have essential but redundant activity in cohesion establishment. Acts by acetylating the cohesin complex component SMC3. In vitro, possesses acetyltransferase activity where it can acetylate itself and components of the cohesin complex (MCD1, IRR1 and PDS5), but is unable to acetylate histones. The sequence is that of N-acetyltransferase ECO1 (ECO1) from Saccharomyces cerevisiae (strain ATCC 204508 / S288c) (Baker's yeast).